Reading from the N-terminus, the 109-residue chain is Aquaporin-2 (109 aa).

The Cytoplasmic portion of the chain corresponds to 1-6 (SIAFSR). A helical transmembrane segment spans residues 7 to 27 (AVFAEFLATLLFVFFGLGSAL). At 28 to 35 (NWPSALPS) the chain is on the extracellular side. The chain crosses the membrane as a helical span at residues 36–54 (TLQIAMAFGLGIGTLVQAL). The Cytoplasmic segment spans residues 55–59 (GHVSG). An intramembrane region (discontinuously helical) is located at residues 60 to 69 (AHINPAVTVA). Residues 63 to 65 (NPA) carry the NPA 1 motif. Residues 70–80 (CLVGCHVSFLR) are Cytoplasmic-facing. Residues 81–102 (AAFYVAAQLLGAVAGAALLHEI) form a helical membrane-spanning segment. The Extracellular portion of the chain corresponds to 103–109 (TPAEVRG).

The protein belongs to the MIP/aquaporin (TC 1.A.8) family. In terms of assembly, homotetramer. Serine phosphorylation is necessary and sufficient for expression at the apical membrane. Endocytosis is not phosphorylation-dependent. In terms of processing, N-glycosylated.

Its subcellular location is the apical cell membrane. It is found in the basolateral cell membrane. The protein resides in the cell membrane. It localises to the cytoplasmic vesicle membrane. The protein localises to the golgi apparatus. Its subcellular location is the trans-Golgi network membrane. The enzyme catalyses H2O(in) = H2O(out). It catalyses the reaction glycerol(in) = glycerol(out). In terms of biological role, forms a water-specific channel that provides the plasma membranes of renal collecting duct with high permeability to water, thereby permitting water to move in the direction of an osmotic gradient. Plays an essential role in renal water homeostasis. Could also be permeable to glycerol. This Oryctolagus cuniculus (Rabbit) protein is Aquaporin-2.